We begin with the raw amino-acid sequence, 236 residues long: (5-formylfuran-3-yl)methyl phosphate synthase (236 aa).

Lys-27 functions as the Schiff-base intermediate with substrate in the catalytic mechanism. The active-site Proton acceptor is Lys-85.

It belongs to the MfnB family.

It carries out the reaction 2 D-glyceraldehyde 3-phosphate = 4-(hydroxymethyl)-2-furancarboxaldehyde phosphate + phosphate + 2 H2O. Its pathway is cofactor biosynthesis; methanofuran biosynthesis. Its function is as follows. Catalyzes the formation of 4-(hydroxymethyl)-2-furancarboxaldehyde phosphate (4-HFC-P) from two molecules of glyceraldehyde-3-P (GA-3-P). The sequence is that of (5-formylfuran-3-yl)methyl phosphate synthase from Methanococcus maripaludis (strain DSM 14266 / JCM 13030 / NBRC 101832 / S2 / LL).